Reading from the N-terminus, the 198-residue chain is Sortase D (198 aa).

A helical transmembrane segment spans residues 7 to 25; that stretch reads LFIIAAGLVIAGYGGFKLI. Over residues 36–46 the composition is skewed to basic and acidic residues; it reads KEAKLAAKKPQ. The disordered stretch occupies residues 36–67; the sequence is KEAKLAAKKPQEASGTKNSTDQAKNKASFKPE. A compositionally biased stretch (polar residues) spans 48-57; sequence ASGTKNSTDQ. Residue histidine 119 is the Proton donor/acceptor of the active site. Cysteine 177 serves as the catalytic Acyl-thioester intermediate.

The protein belongs to the bacterial sortase family. Class D subfamily.

It is found in the cell membrane. In terms of biological role, transpeptidase that anchors surface proteins to the cell wall. Recognizes and modifies its substrate by proteolytic cleavage of a C-terminal sorting signal. Following cleavage, a covalent intermediate is formed via a thioester bond between the sortase and its substrate, which is then transferred and covalently attached to the cell wall. This sortase recognizes a Leu-Pro-Asp-Thr-Ser/Ala (LPDTS/A) motif. It has two substrates, YhcR and YfkN. This Bacillus subtilis (strain 168) protein is Sortase D.